The following is a 91-amino-acid chain: Putative antitoxin YutD (91 aa).

Cysteine 77 and cysteine 81 form a disulfide bridge.

Homodimer, probably forms a complex with cognate toxin YutE.

Functionally, probable antitoxin component of a putative type VII toxin-antitoxin (TA) system. Probably neutralizes cognate toxin YutE. This chain is Putative antitoxin YutD (yutD), found in Bacillus subtilis (strain 168).